Consider the following 702-residue polypeptide: Ribosomal RNA large subunit methyltransferase K/L (702 aa).

Residues 43-154 (LIYQSLMWSR…KETASIALDL (112 aa)) enclose the THUMP domain.

The protein belongs to the methyltransferase superfamily. RlmKL family.

Its subcellular location is the cytoplasm. It catalyses the reaction guanosine(2445) in 23S rRNA + S-adenosyl-L-methionine = N(2)-methylguanosine(2445) in 23S rRNA + S-adenosyl-L-homocysteine + H(+). It carries out the reaction guanosine(2069) in 23S rRNA + S-adenosyl-L-methionine = N(2)-methylguanosine(2069) in 23S rRNA + S-adenosyl-L-homocysteine + H(+). In terms of biological role, specifically methylates the guanine in position 2445 (m2G2445) and the guanine in position 2069 (m7G2069) of 23S rRNA. The sequence is that of Ribosomal RNA large subunit methyltransferase K/L from Salmonella gallinarum (strain 287/91 / NCTC 13346).